Reading from the N-terminus, the 68-residue chain is ELLQNSGNPCCDPVTCKPRRGEHCVSGPCCDNCKFLNAGTVCWPAMGDWNDDYCTGISSDCPRNPVFK.

Residues Glu1–Lys68 form the Disintegrin domain. Intrachain disulfides connect Cys10–Cys33, Cys24–Cys30, Cys29–Cys54, and Cys42–Cys61. A Cell attachment site; atypical (MGD) motif is present at residues Met46–Asp48.

The protein belongs to the venom metalloproteinase (M12B) family. P-II subfamily. P-IIe sub-subfamily. As to quaternary structure, heterodimer with EMF10A; disulfide-linked. In terms of tissue distribution, expressed by the venom gland.

It localises to the secreted. Extremely potent and selective inhibitor of integrin alpha-5/beta-1 (ITGA5/ITGB1). Partially inhibits adhesion of cells expressing alpha-IIb/beta-3 (ITGA2B/ITGB3), alpha-V/beta-3 (ITGAV/ITGB3), and alpha-4/beta-1 (ITGA4/ITGB1) to appropriate ligands only at concentration higher than 500 nM. Weakly inhibits ADP-induced platelet aggregation. This is Disintegrin EMF10B from Eristicophis macmahoni (Leaf-nosed viper).